The sequence spans 235 residues: Motile sperm domain-containing protein 3 (235 aa).

Disordered regions lie at residues 1-30 and 143-170; these read MRRG…PSGP and ELQG…PFPE. An MSP domain is found at 33–145; that stretch reads PVLVFPPDLV…RAPAYPLELQ (113 aa). 2 helical membrane-spanning segments follow: residues 180 to 200 and 213 to 233; these read SFLL…LPLQ and VSLG…MVFL.

The protein localises to the membrane. This chain is Motile sperm domain-containing protein 3 (MOSPD3), found in Bos taurus (Bovine).